A 437-amino-acid polypeptide reads, in one-letter code: 3-phosphoshikimate 1-carboxyvinyltransferase (437 aa).

Residues K26, S27, and R31 each contribute to the 3-phosphoshikimate site. Position 26 (K26) interacts with phosphoenolpyruvate. Residues G99 and R127 each contribute to the phosphoenolpyruvate site. Positions 172, 174, 320, and 347 each coordinate 3-phosphoshikimate. Q174 contributes to the phosphoenolpyruvate binding site. The active-site Proton acceptor is D320. Phosphoenolpyruvate is bound by residues R351 and R392.

The protein belongs to the EPSP synthase family. Monomer.

It is found in the cytoplasm. It carries out the reaction 3-phosphoshikimate + phosphoenolpyruvate = 5-O-(1-carboxyvinyl)-3-phosphoshikimate + phosphate. It participates in metabolic intermediate biosynthesis; chorismate biosynthesis; chorismate from D-erythrose 4-phosphate and phosphoenolpyruvate: step 6/7. In terms of biological role, catalyzes the transfer of the enolpyruvyl moiety of phosphoenolpyruvate (PEP) to the 5-hydroxyl of shikimate-3-phosphate (S3P) to produce enolpyruvyl shikimate-3-phosphate and inorganic phosphate. The sequence is that of 3-phosphoshikimate 1-carboxyvinyltransferase from Methylococcus capsulatus (strain ATCC 33009 / NCIMB 11132 / Bath).